Reading from the N-terminus, the 278-residue chain is Bis(5'-nucleosyl)-tetraphosphatase, symmetrical (278 aa).

It belongs to the Ap4A hydrolase family.

It catalyses the reaction P(1),P(4)-bis(5'-adenosyl) tetraphosphate + H2O = 2 ADP + 2 H(+). Functionally, hydrolyzes diadenosine 5',5'''-P1,P4-tetraphosphate to yield ADP. This is Bis(5'-nucleosyl)-tetraphosphatase, symmetrical from Buchnera aphidicola subsp. Baizongia pistaciae (strain Bp).